Reading from the N-terminus, the 240-residue chain is uncharacterized protein (240 aa).

An ABC transporter domain is found at 2–223; that stretch reads VRIQDLSLAF…GNAPRELHQA (222 aa). 34–41 contributes to the ATP binding site; the sequence is GSSGVGKS.

The protein belongs to the ABC transporter superfamily.

This is an uncharacterized protein from Haemophilus influenzae (strain ATCC 51907 / DSM 11121 / KW20 / Rd).